Consider the following 386-residue polypeptide: O-methyltransferase 11 (386 aa).

S-adenosyl-L-homocysteine-binding residues include Ser207, Gly231, Asp254, Asp274, and Lys288. Residue Asp254 participates in S-adenosyl-L-methionine binding. The Proton acceptor role is filled by His292.

Belongs to the class I-like SAM-binding methyltransferase superfamily. Cation-independent O-methyltransferase family. In terms of assembly, homodimer.

It carries out the reaction dopamine + S-adenosyl-L-methionine = 4-methoxytyramine + S-adenosyl-L-homocysteine + H(+). It catalyses the reaction 3,4-dihydroxy-5-methoxyphenethylamine + S-adenosyl-L-methionine = 3-hydroxy-4,5-dimethoxyphenethylamine + S-adenosyl-L-homocysteine + H(+). The enzyme catalyses 3-hydroxy-4,5-dimethoxyphenethylamine + S-adenosyl-L-methionine = mescaline + S-adenosyl-L-homocysteine + H(+). The catalysed reaction is 4-hydroxy-3,5-dimethoxyphenethylamine + S-adenosyl-L-methionine = mescaline + S-adenosyl-L-homocysteine + H(+). The protein operates within aromatic compound metabolism. Its pathway is alkaloid biosynthesis. Functionally, O-methyltransferase participating in the biosynthesis of natural products derived from phenylethylamine, including mescaline, a natural hallucinogen potentially used in psychotherapeutic treatments. Catalyzes the O-methylation of mescaline para hydroxyl groups, using dopamine, 3,4-dihydroxy-5-methoxyphenethylamine, 3-hydroxy-4,5-dimethoxyphenethylamine and 4-hydroxy-3,5-dimethoxyphenethylamine as substrates. In Lophophora williamsii (Peyote), this protein is O-methyltransferase 11.